A 257-amino-acid chain; its full sequence is Trans-aconitate 2-methyltransferase (257 aa).

The protein belongs to the methyltransferase superfamily. Tam family.

The protein resides in the cytoplasm. The enzyme catalyses trans-aconitate + S-adenosyl-L-methionine = (E)-3-(methoxycarbonyl)pent-2-enedioate + S-adenosyl-L-homocysteine. Functionally, catalyzes the S-adenosylmethionine monomethyl esterification of trans-aconitate. This is Trans-aconitate 2-methyltransferase from Rhizobium meliloti (strain 1021) (Ensifer meliloti).